A 207-amino-acid polypeptide reads, in one-letter code: 2,3-bisphosphoglycerate-dependent phosphoglycerate mutase (207 aa).

Residues 10–17 (RHGQSEWN), 23–24 (TG), Arg62, 89–92 (ERDY), Lys100, 116–117 (RR), and 160–161 (GN) each bind substrate. The active-site Tele-phosphohistidine intermediate is the His11. Glu89 serves as the catalytic Proton donor/acceptor.

This sequence belongs to the phosphoglycerate mutase family. BPG-dependent PGAM subfamily. Homodimer.

The enzyme catalyses (2R)-2-phosphoglycerate = (2R)-3-phosphoglycerate. Its pathway is carbohydrate degradation; glycolysis; pyruvate from D-glyceraldehyde 3-phosphate: step 3/5. In terms of biological role, catalyzes the interconversion of 2-phosphoglycerate and 3-phosphoglycerate. The chain is 2,3-bisphosphoglycerate-dependent phosphoglycerate mutase from Nitrobacter winogradskyi (strain ATCC 25391 / DSM 10237 / CIP 104748 / NCIMB 11846 / Nb-255).